A 149-amino-acid polypeptide reads, in one-letter code: Nucleoside diphosphate kinase (149 aa).

Residues Lys-9, Phe-57, Arg-85, Thr-91, Arg-102, and Asn-112 each coordinate ATP. Residue His-115 is the Pros-phosphohistidine intermediate of the active site.

It belongs to the NDK family. In terms of assembly, homotetramer. It depends on Mg(2+) as a cofactor.

It is found in the cytoplasm. It carries out the reaction a 2'-deoxyribonucleoside 5'-diphosphate + ATP = a 2'-deoxyribonucleoside 5'-triphosphate + ADP. The enzyme catalyses a ribonucleoside 5'-diphosphate + ATP = a ribonucleoside 5'-triphosphate + ADP. Functionally, major role in the synthesis of nucleoside triphosphates other than ATP. The ATP gamma phosphate is transferred to the NDP beta phosphate via a ping-pong mechanism, using a phosphorylated active-site intermediate. This chain is Nucleoside diphosphate kinase, found in Acaryochloris marina (strain MBIC 11017).